A 596-amino-acid chain; its full sequence is Trehalase (596 aa).

Residues 1-23 (MFKLPTISLLLVSWSCLVALSQA) form the signal peptide. Residues R193, 200 to 201 (WD), N237, and 246 to 248 (RSQ) each bind substrate. N288 and N293 each carry an N-linked (GlcNAc...) asparagine glycan. Positions 303 to 323 (SSGPRPESYREDVETGEEFPT) are disordered. Substrate-binding positions include 307-309 (RPE) and G341. D343 acts as the Proton donor/acceptor in catalysis. N-linked (GlcNAc...) asparagine glycosylation is found at N359, N451, and N516. The active-site Proton donor/acceptor is E541. Residue E556 participates in substrate binding.

It belongs to the glycosyl hydrolase 37 family. In the adult brain predominantly expressed in glial cells (at protein level).

It catalyses the reaction alpha,alpha-trehalose + H2O = alpha-D-glucose + beta-D-glucose. In terms of biological role, enzyme that cleaves trehalose to produce 2 glucose molecules that can be used by the glycolytic pathway. Glycolysis is essential in glial cells but not in neurons; neurons rely on the citric acid cycle for their energy needs, and on lactate and alanine secreted into the hemolymph by glial cells to fuel it. This is Trehalase from Drosophila melanogaster (Fruit fly).